A 96-amino-acid polypeptide reads, in one-letter code: UPF0358 protein Aflv_1873 (96 aa).

It belongs to the UPF0358 family.

The chain is UPF0358 protein Aflv_1873 from Anoxybacillus flavithermus (strain DSM 21510 / WK1).